The chain runs to 239 residues: Tetrahydromethanopterin S-methyltransferase subunit A (239 aa).

Topologically, residues 1–215 (MADKKAPAAG…EAAMIAKFNS (215 aa)) are cytoplasmic. H85 contacts 5-hydroxybenzimidazolylcob(I)amide. The chain crosses the membrane as a helical span at residues 216–238 (GYYNGKIQGIAIGLFLSIVIFSL). A topological domain (extracellular) is located at residue L239.

The protein belongs to the MtrA family. As to quaternary structure, the complex is composed of 8 subunits; MtrA, MtrB, MtrC, MtrD, MtrE, MtrF, MtrG and MtrH. The cofactor is 5-hydroxybenzimidazolylcob(I)amide.

It is found in the cell membrane. It catalyses the reaction 5-methyl-5,6,7,8-tetrahydromethanopterin + coenzyme M + 2 Na(+)(in) = 5,6,7,8-tetrahydromethanopterin + methyl-coenzyme M + 2 Na(+)(out). It participates in one-carbon metabolism; methanogenesis from CO(2); methyl-coenzyme M from 5,10-methylene-5,6,7,8-tetrahydromethanopterin: step 2/2. Its function is as follows. Part of a complex that catalyzes the formation of methyl-coenzyme M and tetrahydromethanopterin from coenzyme M and methyl-tetrahydromethanopterin. This is an energy-conserving, sodium-ion translocating step. The sequence is that of Tetrahydromethanopterin S-methyltransferase subunit A from Methanococcus maripaludis (strain DSM 14266 / JCM 13030 / NBRC 101832 / S2 / LL).